We begin with the raw amino-acid sequence, 786 residues long: Digalactosyldiacylglycerol synthase 1, chloroplastic (786 aa).

A chloroplast-targeting transit peptide spans 1–25; sequence MASQRQPPSSSNAFSFLSKGWREVR.

The protein belongs to the glycosyltransferase group 1 family. Glycosyltransferase 4 subfamily. High expression in nodules infected cells, but low in nodule inner cortex and root central cylinder.

The protein localises to the plastid. The protein resides in the chloroplast outer membrane. It is found in the plastid outer membrane. It carries out the reaction a 1,2-diacyl-3-O-(beta-D-galactosyl)-sn-glycerol + UDP-alpha-D-galactose = a 1,2-diacyl-3-O-[alpha-D-galactosyl-(1-&gt;6)-beta-D-galactosyl]-sn-glycerol + UDP + H(+). Functionally, involved in the synthesis of diacylglycerol galactolipids that are specifically found in thylakoid and in nodule peribacteroid membranes. Specific for alpha-glycosidic linkages. In Lotus japonicus (Lotus corniculatus var. japonicus), this protein is Digalactosyldiacylglycerol synthase 1, chloroplastic.